Reading from the N-terminus, the 746-residue chain is Bud site selection protein 7 (746 aa).

The tract at residues 733–746 is CHS5-binding; that stretch reads LNFFTTCTIGCYDA.

This sequence belongs to the CHAPS family. As to quaternary structure, component of the CHS5/6 complex composed of the 4 CHAPS proteins BCH1, BCH2v, BUD7, and CHS6 as well as at least CHS5 and GTP-bound ARF1. The complex interacts with the cargo protein CHS3.

It localises to the golgi apparatus. The protein resides in the trans-Golgi network membrane. In terms of biological role, member of the CHS5-ARF1P-binding proteins (CHAPS) which mediates export of specific cargo proteins, including chitin synthase CHS3. May be involved in positioning the proximal bud pole signal. The sequence is that of Bud site selection protein 7 (BUD7) from Saccharomyces cerevisiae (strain ATCC 204508 / S288c) (Baker's yeast).